The primary structure comprises 395 residues: RNA polymerase II elongation factor ELL3 (395 aa).

2 disordered regions span residues 129-177 and 189-281; these read LTEG…SEPM and PSRE…SPEE. A Phosphoserine modification is found at S242. The span at 243-260 shows a compositional bias: acidic residues; that stretch reads QEGEDWGQDEDEEGDEDG. Low complexity predominate over residues 269-279; that stretch reads SAPSASESPSP. Residues 283–393 enclose the OCEL domain; it reads PDYLLQYRAI…LILEFEEKNR (111 aa).

It belongs to the ELL/occludin family. Component of the little elongation complex (LEC), at least composed of ELL (ELL, ELL2 or ELL3), ZC3H8, ICE1 and ICE2. Component of the super elongation complex (SEC), at least composed of EAF1, EAF2, CDK9, MLLT3/AF9, AFF (AFF1 or AFF4), the P-TEFb complex and ELL (ELL, ELL2 or ELL3). Interacts with AFF4. As to expression, actively expressed in embryonic stem cells (ES cells), while it is weakly expressed in differentiated cells.

It localises to the nucleus. Enhancer-binding elongation factor that specifically binds enhancers in embryonic stem cells (ES cells), marks them, and is required for their future activation during stem cell specification. Elongation factor component of the super elongation complex (SEC), a complex required to increase the catalytic rate of RNA polymerase II transcription by suppressing transient pausing by the polymerase at multiple sites along the DNA. Component of the little elongation complex (LEC), a complex required to regulate small nuclear RNA (snRNA) gene transcription by RNA polymerase II and III. Does not only bind to enhancer regions of active genes, but also marks the enhancers that are in a poised or inactive state in ES cells and is required for establishing proper RNA polymerase II occupancy at developmentally regulated genes in a cohesin-dependent manner. Probably required for priming developmentally regulated genes for later recruitment of the super elongation complex (SEC), for transcriptional activation during differentiation. Required for recruitment of P-TEFb within SEC during differentiation. Probably preloaded on germ cell chromatin, suggesting that it may prime gene activation by marking enhancers as early as in the germ cells. Promoting epithelial-mesenchymal transition (EMT). This is RNA polymerase II elongation factor ELL3 (Ell3) from Mus musculus (Mouse).